A 237-amino-acid chain; its full sequence is Neurogenin-1 (237 aa).

Residues 35–83 (LQQAASASGPPAPARRGAPNISRASEVPGAQDDEQERRRRRGRTRVRSE) are disordered. A compositionally biased stretch (low complexity) spans 38 to 53 (AASASGPPAPARRGAP). Positions 92–144 (SRRVKANDRERNRMHNLNAALDALRSVLPSFPDDTKLTKIETLRFAYNYIWAL) constitute a bHLH domain. The disordered stretch occupies residues 175–209 (GPPSPASDAESWGSGAAAASPLSDPSSPAASEDFT). Residues 180–207 (ASDAESWGSGAAAASPLSDPSSPAASED) are compositionally biased toward low complexity.

Efficient DNA binding requires dimerization with another bHLH protein. In terms of tissue distribution, expression restricted to the embryonic nervous system.

The protein resides in the nucleus. Functionally, acts as a transcriptional regulator. Involved in the initiation of neuronal differentiation. Activates transcription by binding to the E box (5'-CANNTG-3'). Associates with chromatin to enhancer regulatory elements in genes encoding key transcriptional regulators of neurogenesis. In Homo sapiens (Human), this protein is Neurogenin-1 (NEUROG1).